Here is a 206-residue protein sequence, read N- to C-terminus: Ribosomal RNA small subunit methyltransferase G (206 aa).

Residues G71, F76, 122–123 (AE), and R135 contribute to the S-adenosyl-L-methionine site.

It belongs to the methyltransferase superfamily. RNA methyltransferase RsmG family.

Its subcellular location is the cytoplasm. Functionally, specifically methylates the N7 position of a guanine in 16S rRNA. The sequence is that of Ribosomal RNA small subunit methyltransferase G from Bacteroides fragilis (strain ATCC 25285 / DSM 2151 / CCUG 4856 / JCM 11019 / LMG 10263 / NCTC 9343 / Onslow / VPI 2553 / EN-2).